The primary structure comprises 524 residues: 2-isopropylmalate synthase (524 aa).

Residues 12–274 form the Pyruvate carboxyltransferase domain; it reads VIIFDTTLRD…WNNIETTMLT (263 aa). Residues Asp-21, His-209, His-211, and Asn-245 each coordinate Mn(2+). Residues 398-524 form a regulatory domain region; sequence KLNSLTVIAG…EAVPAVAAAG (127 aa).

It belongs to the alpha-IPM synthase/homocitrate synthase family. LeuA type 1 subfamily. As to quaternary structure, homodimer. It depends on Mn(2+) as a cofactor.

It is found in the cytoplasm. It carries out the reaction 3-methyl-2-oxobutanoate + acetyl-CoA + H2O = (2S)-2-isopropylmalate + CoA + H(+). It functions in the pathway amino-acid biosynthesis; L-leucine biosynthesis; L-leucine from 3-methyl-2-oxobutanoate: step 1/4. Catalyzes the condensation of the acetyl group of acetyl-CoA with 3-methyl-2-oxobutanoate (2-ketoisovalerate) to form 3-carboxy-3-hydroxy-4-methylpentanoate (2-isopropylmalate). The chain is 2-isopropylmalate synthase from Rhodopseudomonas palustris (strain HaA2).